The chain runs to 151 residues: UPF0251 protein Ctha_0452 (151 aa).

This sequence belongs to the UPF0251 family.

This Chloroherpeton thalassium (strain ATCC 35110 / GB-78) protein is UPF0251 protein Ctha_0452.